The chain runs to 188 residues: Ribosome-recycling factor (188 aa).

This sequence belongs to the RRF family.

Its subcellular location is the cytoplasm. Functionally, responsible for the release of ribosomes from messenger RNA at the termination of protein biosynthesis. May increase the efficiency of translation by recycling ribosomes from one round of translation to another. This Anaeromyxobacter dehalogenans (strain 2CP-C) protein is Ribosome-recycling factor.